The following is a 273-amino-acid chain: Homeobox protein Nkx-2.2 (273 aa).

Disordered stretches follow at residues 1-56 (MSLT…LDAV) and 91-131 (AASA…KRKR). Acidic residues predominate over residues 20–38 (DTNDEDGSVAEGPEEESEG). Positions 128–187 (KRKRRVLFSKAQTYELERRFRQQRYLSAPEREHLASLIRLTPTQVKIWFQNHRYKMKRAR) form a DNA-binding region, homeobox.

This sequence belongs to the NK-2 homeobox family. In terms of assembly, interacts with OLIG2. Expressed in restricted areas of the developing CNS: the hindbrain and forebrain, and pancreas.

Its subcellular location is the nucleus. In terms of biological role, transcriptional activator involved in the development of insulin-producting beta cells in the endocrine pancreas. May also be involved in specifying diencephalic neuromeric boundaries, and in controlling the expression of genes that play a role in axonal guidance. Binds to elements within the NEUROD1 promoter. This chain is Homeobox protein Nkx-2.2 (Nkx2-2), found in Mus musculus (Mouse).